The following is a 172-amino-acid chain: Large ribosomal subunit protein uL10 (172 aa).

The protein belongs to the universal ribosomal protein uL10 family. As to quaternary structure, part of the ribosomal stalk of the 50S ribosomal subunit. The N-terminus interacts with L11 and the large rRNA to form the base of the stalk. The C-terminus forms an elongated spine to which L12 dimers bind in a sequential fashion forming a multimeric L10(L12)X complex.

Forms part of the ribosomal stalk, playing a central role in the interaction of the ribosome with GTP-bound translation factors. This chain is Large ribosomal subunit protein uL10, found in Rhodopseudomonas palustris (strain BisB5).